Here is a 1534-residue protein sequence, read N- to C-terminus: DNA polymerase alpha catalytic subunit (1534 aa).

Low complexity predominate over residues 1–12; it reads MDEGSADAGASG. Disordered regions lie at residues 1-23, 96-141, and 864-905; these read MDEG…SEAV, THRT…LSAA, and FNST…GPSY. Positions 116-125 are enriched in basic residues; it reads RKRKQPRPQS. Residues 127-141 show a composition bias toward low complexity; that stretch reads RPPQQSAAAASLSAA. Basic and acidic residues-rich tracts occupy residues 864–882 and 889–898; these read FNST…RPDE and DEGHHVDQGK. Zn(2+) contacts are provided by Cys1340, Cys1343, Cys1383, Cys1386, Cys1422, Cys1427, Cys1448, and Cys1454. Residues 1340-1386 form a CysA-type zinc finger; sequence CPSCSTTFDCPPVSSLIIGSSSGNVSNPNEGNDASINFWRRMRCPRC. The short motif at 1422–1451 is the CysB motif element; it reads CDDEGCKYSTHSVNLRVMGDSERGTICPNY.

Belongs to the DNA polymerase type-B family.

It localises to the nucleus. The catalysed reaction is DNA(n) + a 2'-deoxyribonucleoside 5'-triphosphate = DNA(n+1) + diphosphate. Its function is as follows. Polymerase alpha in a complex with DNA primase is a replicative polymerase. This is DNA polymerase alpha catalytic subunit from Oryza sativa subsp. japonica (Rice).